The chain runs to 328 residues: MKFLAFLSLLSLVLQKAETASLLGEREREEQSPEEGDTYASLYVGNHTLSIEDYNEVIDLSNYEELADYGDQIPEAKISNLTLPTRTSPTSTVAQKTLSPNLTMAVPTTTGLLNSQSSHGLPTCLVCVCLGSSVYCDDADLENIPPLPQMTTYLYARFNHISHIQAGDFKGLTKLRRIDLSGNSISSIHNDALRLLPALQDLILPENQLAALPVLPSGIEFLDVRLNRLQSSGIQPEAFVALKKLQFLYLANNMLDSIPGPLPLSLRSLHLQNNMIETMESDTFCDTGEHRHERRQLEDIRLDGNPINLSLFPEAYFCLPRLPVGHFT.

Positions 1–19 (MKFLAFLSLLSLVLQKAET) are cleaved as a signal peptide. Asparagine 46 carries an N-linked (GlcNAc...) asparagine glycan. Residue tyrosine 69 is modified to Sulfotyrosine. Residues asparagine 80 and asparagine 101 are each glycosylated (N-linked (GlcNAc...) asparagine). The LRRNT domain maps to 112-149 (LLNSQSSHGLPTCLVCVCLGSSVYCDDADLENIPPLPQ). LRR repeat units lie at residues 150 to 171 (MTTY…DFKG), 174 to 195 (KLRR…ALRL), 198 to 219 (ALQD…PSGI), 244 to 265 (KLQF…LPLS), 266 to 286 (LRSL…TFCD), and 296 to 316 (QLED…PEAY). Cysteines 285 and 318 form a disulfide. The N-linked (GlcNAc...) asparagine glycan is linked to asparagine 308.

Belongs to the small leucine-rich proteoglycan (SLRP) family. SLRP class III subfamily. Homodimer. In terms of processing, O-glycosylated. Post-translationally, sulfated on tyrosine residues. Proteolytically cleaved by MMP1, MMP2, MMP3, MMP7, MMP8, MMP9, ADAMTS4, and ADAMTS5. Proteolytically cleaved by MMP13. Expressed in cartilage (at protein level). Expressed in the vitreous collagen, inner limiting membrane, lens capsule, trabecular meshwork, anterior surface of the iris, the area adjacent to the nonpigmented ciliary epithelium, and weakly expressed in the retina of the eye (at protein level). Expressed in the nonpigmented ciliary epithelium of the eye.

The protein resides in the secreted. It is found in the extracellular space. It localises to the extracellular matrix. Functionally, inhibits angiogenesis in the vitreous humor of the eye, and therefore represses neovascularization. Binds collagen fibrils. May be involved in collagen fiber organization via regulation of other members of the small leucine-rich repeat proteoglycan superfamily. This Mus musculus (Mouse) protein is Opticin (Optc).